Consider the following 357-residue polypeptide: Protein-arginine kinase (357 aa).

The 232-residue stretch at 24 to 255 (IVISTRLRIA…RQIIEQERVA (232 aa)) folds into the Phosphagen kinase C-terminal domain. Residues 27 to 31 (STRLR), His-92, Arg-126, 177 to 181 (RASVM), and 208 to 213 (RGIYGE) each bind ATP. The RDXXRA motif of the pArg binding pocket involved in allosteric regulation signature appears at 338–343 (RDERRA).

It belongs to the ATP:guanido phosphotransferase family.

It catalyses the reaction L-arginyl-[protein] + ATP = N(omega)-phospho-L-arginyl-[protein] + ADP + H(+). Its activity is regulated as follows. Appears to be allosterically activated by the binding of pArg-containing polypeptides to the pArg-binding pocket localized in the C-terminal domain of McsB. Catalyzes the specific phosphorylation of arginine residues in proteins. The sequence is that of Protein-arginine kinase from Brevibacillus brevis (strain 47 / JCM 6285 / NBRC 100599).